Consider the following 881-residue polypeptide: Leucine--tRNA ligase (881 aa).

A 'HIGH' region motif is present at residues 48–58 (PYPSGKLHMGH). The 'KMSKS' region signature appears at 638 to 642 (KMSKS). Lys641 is an ATP binding site.

It belongs to the class-I aminoacyl-tRNA synthetase family.

The protein resides in the cytoplasm. It carries out the reaction tRNA(Leu) + L-leucine + ATP = L-leucyl-tRNA(Leu) + AMP + diphosphate. This Herminiimonas arsenicoxydans protein is Leucine--tRNA ligase.